The primary structure comprises 283 residues: Lectin-like protein At1g53080 (283 aa).

Residues 1–23 (MQIHKLCIFVLFISLLSSKTISA) form the signal peptide. Positions 24–277 (VKFNFNRFDG…RHDIWSWSFE (254 aa)) are legume-lectin like. N-linked (GlcNAc...) asparagine glycans are attached at residues N84 and N138. S247 is subject to Phosphoserine.

Belongs to the leguminous lectin family.

It is found in the secreted. It localises to the extracellular space. The protein resides in the apoplast. In Arabidopsis thaliana (Mouse-ear cress), this protein is Lectin-like protein At1g53080.